The primary structure comprises 395 residues: Transcription termination/antitermination protein NusA (395 aa).

The 65-residue stretch at 137-201 (NSVLMGQVIL…TKKGLLLELS (65 aa)) folds into the S1 motif domain. KH domains lie at 243 to 291 (SHNA…TLAL) and 331 to 378 (KVRL…NESE).

Belongs to the NusA family. As to quaternary structure, monomer. Binds directly to the core enzyme of the DNA-dependent RNA polymerase and to nascent RNA.

It localises to the cytoplasm. Participates in both transcription termination and antitermination. The chain is Transcription termination/antitermination protein NusA from Helicobacter pylori (strain ATCC 700392 / 26695) (Campylobacter pylori).